The following is a 400-amino-acid chain: Phosphoglycerate kinase (400 aa).

Substrate is bound by residues 20 to 22, arginine 35, 58 to 61, arginine 115, and arginine 155; these read DLN and HQGR. ATP contacts are provided by residues glutamate 330 and 356-359; that span reads GGDT.

It belongs to the phosphoglycerate kinase family. Monomer.

It localises to the cytoplasm. The catalysed reaction is (2R)-3-phosphoglycerate + ATP = (2R)-3-phospho-glyceroyl phosphate + ADP. It participates in carbohydrate degradation; glycolysis; pyruvate from D-glyceraldehyde 3-phosphate: step 2/5. The chain is Phosphoglycerate kinase from Haloarcula marismortui (strain ATCC 43049 / DSM 3752 / JCM 8966 / VKM B-1809) (Halobacterium marismortui).